The primary structure comprises 495 residues: Cobyric acid synthase (495 aa).

The GATase cobBQ-type domain occupies 249-443 (EININVIRLP…LHGLFDNGAW (195 aa)). The active-site Nucleophile is the cysteine 330. Histidine 435 is an active-site residue.

Belongs to the CobB/CobQ family. CobQ subfamily.

The protein operates within cofactor biosynthesis; adenosylcobalamin biosynthesis. Catalyzes amidations at positions B, D, E, and G on adenosylcobyrinic A,C-diamide. NH(2) groups are provided by glutamine, and one molecule of ATP is hydrogenolyzed for each amidation. The protein is Cobyric acid synthase of Gloeothece citriformis (strain PCC 7424) (Cyanothece sp. (strain PCC 7424)).